The primary structure comprises 287 residues: 2-dehydro-3-deoxyphosphooctonate aldolase (287 aa).

This sequence belongs to the KdsA family.

The protein localises to the cytoplasm. The catalysed reaction is D-arabinose 5-phosphate + phosphoenolpyruvate + H2O = 3-deoxy-alpha-D-manno-2-octulosonate-8-phosphate + phosphate. Its pathway is carbohydrate biosynthesis; 3-deoxy-D-manno-octulosonate biosynthesis; 3-deoxy-D-manno-octulosonate from D-ribulose 5-phosphate: step 2/3. The protein operates within bacterial outer membrane biogenesis; lipopolysaccharide biosynthesis. This is 2-dehydro-3-deoxyphosphooctonate aldolase from Rhodopseudomonas palustris (strain BisB5).